A 185-amino-acid polypeptide reads, in one-letter code: Ribosome-recycling factor (185 aa).

Belongs to the RRF family.

It localises to the cytoplasm. In terms of biological role, responsible for the release of ribosomes from messenger RNA at the termination of protein biosynthesis. May increase the efficiency of translation by recycling ribosomes from one round of translation to another. This is Ribosome-recycling factor from Shewanella denitrificans (strain OS217 / ATCC BAA-1090 / DSM 15013).